The primary structure comprises 369 residues: Cytochrome b561 and DOMON domain-containing protein At3g07570 (369 aa).

An N-terminal signal peptide occupies residues 1 to 22; sequence MKLYSVSIIIFVLIALSTIVNA. The region spanning 55-167 is the DOMON domain; that stretch reads QNFILRYART…PRQSLLYAVG (113 aa). In terms of domain architecture, Cytochrome b561 spans 174–369; that stretch reads SSPDFRLREH…GLEVRKFLKK (196 aa). The helical transmembrane segment at 212–232 threads the bilayer; sequence THGLMNMFGWGILIIVGAIVA. Residues H213 and H246 each contribute to the heme b site. 2 helical membrane-spanning segments follow: residues 247–267 and 279–299; these read IALQ…GLVL and HKGL…ALLA. Residues H279 and H315 each coordinate heme b. Transmembrane regions (helical) follow at residues 321–341 and 343–363; these read LLII…KAGT and WNGG…GLEV.

Heme b serves as cofactor.

It is found in the membrane. May act as a catecholamine-responsive trans-membrane electron transporter. This is Cytochrome b561 and DOMON domain-containing protein At3g07570 from Arabidopsis thaliana (Mouse-ear cress).